A 585-amino-acid chain; its full sequence is MSHDMTSRELYLRLLTYVRPYWKAFLAALACMGVASLAEPVFPAIMKSLLDDGFSKANGPWDWLFYPLAIMGIFLVRAIFGFLGDYLMSWVSNNVVAELRQAMFARMVRLPTRYYSDNLSGRLMSRIAYDVTGVAGAATNALTSLIKDSLSIVGLLVWLLWLNWQLTLITLSVVPFIAIVVRVFSKRLRSVARGQQESMGKITQVLQEAIEGHKVVKIFGGQSYEEDRFYESIREQRRLAMRATLASAAQSPLVQFFAASGVAIIMGVALKQASSDQTTVGSFVSFVTAMLMLMAPLKRVTDVNAPIQRGLAAAESVFSLVDEETEPDSGKEELGRAQGLVEFDGVTFTYPGSERPALDSVSLTVRPGECVALVGPSGSGKTTAANLLPRFYALDAGEIRVDGHALPNIRLNSLRDNIALVSQDVVLFNDTIGANIAYGGKRDATLDEIRAAAKAAHALEFIDALPEGLNTMIGENGVKLSGGQRQRLAIARAILKDAPILILDEATSALDTESERHVQAALDELMRGRSTLVIAHRLSTIERADRIIALAHGHKQEEGSHAELLAHDGLYARLYRMQKAEEVAV.

Transmembrane regions (helical) follow at residues 25 to 45 (FLAA…FPAI), 63 to 83 (WLFY…FGFL), 127 to 146 (IAYD…TSLI), 150 to 170 (LSIV…TLIT), 250 to 270 (QSPL…GVAL), and 277 to 297 (QTTV…MAPL). Residues 26-309 (LAALACMGVA…VTDVNAPIQR (284 aa)) enclose the ABC transmembrane type-1 domain. Residues 341–577 (VEFDGVTFTY…DGLYARLYRM (237 aa)) form the ABC transporter domain. ATP is bound at residue 375–382 (GPSGSGKT).

Belongs to the ABC transporter superfamily. Lipid exporter (TC 3.A.1.106) family. In terms of assembly, homodimer.

The protein localises to the cell inner membrane. The catalysed reaction is ATP + H2O + lipid A-core oligosaccharideSide 1 = ADP + phosphate + lipid A-core oligosaccharideSide 2.. Its function is as follows. Involved in lipopolysaccharide (LPS) biosynthesis. Translocates lipid A-core from the inner to the outer leaflet of the inner membrane. Transmembrane domains (TMD) form a pore in the inner membrane and the ATP-binding domain (NBD) is responsible for energy generation. The polypeptide is ATP-dependent lipid A-core flippase (Dechloromonas aromatica (strain RCB)).